The primary structure comprises 465 residues: uncharacterized protein (465 aa).

The RAMA domain maps to 6–91 (NVTLSNLIDF…LKLKREYLFR (86 aa)). 2 disordered regions span residues 95 to 377 (TGKN…SNNQ) and 392 to 465 (YNQQ…KSKS). Positions 117-137 (PQQQQQQQQQQQQQQQQQQQP) are enriched in low complexity. Residues 156–169 (ETSDQDIDNDDDDA) show a composition bias toward acidic residues. The segment covering 177 to 190 (TTTTTTTTTTTTTT) has biased composition (low complexity). Over residues 208 to 220 (PKEKKKEKKENIL) the composition is skewed to basic and acidic residues. Residues 214 to 242 (EKKENILTKKKQQSLQYQQQLQLLQRQNS) are a coiled coil. Residues 226 to 263 (QSLQYQQQLQLLQRQNSPPSVSPSSSTSTSSSTSSPAS) show a composition bias toward low complexity. The segment covering 264-294 (NQIFNSFGPNSQNHNQYGINYNSQQHQPQQY) has biased composition (polar residues). A compositionally biased stretch (low complexity) spans 295 to 376 (NNNNNNNNNN…NNNINNNSNN (82 aa)). Positions 392–407 (YNQQNPPKHQYPNNFL) are enriched in polar residues. The span at 424-442 (NQSQNQNQNQNQNQNQNQK) shows a compositional bias: low complexity. Positions 443–465 (SKSKSKSKSKFKSKSKSKSKSKS) are enriched in basic residues.

This is an uncharacterized protein from Dictyostelium discoideum (Social amoeba).